Reading from the N-terminus, the 285-residue chain is Nucleotide-binding protein Pnap_0906 (285 aa).

An ATP-binding site is contributed by glycine 8–serine 15. Aspartate 57–serine 60 is a GTP binding site.

The protein belongs to the RapZ-like family.

Displays ATPase and GTPase activities. The chain is Nucleotide-binding protein Pnap_0906 from Polaromonas naphthalenivorans (strain CJ2).